A 301-amino-acid polypeptide reads, in one-letter code: Sulfate adenylyltransferase subunit 2 (301 aa).

The protein belongs to the PAPS reductase family. CysD subfamily. Heterodimer composed of CysD, the smaller subunit, and CysN.

The enzyme catalyses sulfate + ATP + H(+) = adenosine 5'-phosphosulfate + diphosphate. It functions in the pathway sulfur metabolism; hydrogen sulfide biosynthesis; sulfite from sulfate: step 1/3. Its function is as follows. With CysN forms the ATP sulfurylase (ATPS) that catalyzes the adenylation of sulfate producing adenosine 5'-phosphosulfate (APS) and diphosphate, the first enzymatic step in sulfur assimilation pathway. APS synthesis involves the formation of a high-energy phosphoric-sulfuric acid anhydride bond driven by GTP hydrolysis by CysN coupled to ATP hydrolysis by CysD. The chain is Sulfate adenylyltransferase subunit 2 from Geobacter metallireducens (strain ATCC 53774 / DSM 7210 / GS-15).